A 310-amino-acid chain; its full sequence is ADP-L-glycero-D-manno-heptose-6-epimerase (310 aa).

NADP(+)-binding positions include 10-11 (FI), 31-32 (DN), Lys-38, Lys-53, 75-79 (EGACS), and Asn-92. Tyr-140 acts as the Proton acceptor in catalysis. Lys-144 serves as a coordination point for NADP(+). Asn-169 is a substrate binding site. NADP(+) is bound by residues Val-170 and Lys-178. The Proton acceptor role is filled by Lys-178. Substrate-binding positions include Ser-180, His-187, 201–204 (FEGS), Arg-209, and Tyr-272.

Belongs to the NAD(P)-dependent epimerase/dehydratase family. HldD subfamily. In terms of assembly, homopentamer. NADP(+) serves as cofactor.

It carries out the reaction ADP-D-glycero-beta-D-manno-heptose = ADP-L-glycero-beta-D-manno-heptose. It participates in nucleotide-sugar biosynthesis; ADP-L-glycero-beta-D-manno-heptose biosynthesis; ADP-L-glycero-beta-D-manno-heptose from D-glycero-beta-D-manno-heptose 7-phosphate: step 4/4. Functionally, catalyzes the interconversion between ADP-D-glycero-beta-D-manno-heptose and ADP-L-glycero-beta-D-manno-heptose via an epimerization at carbon 6 of the heptose. The polypeptide is ADP-L-glycero-D-manno-heptose-6-epimerase (Salmonella heidelberg (strain SL476)).